The following is a 94-amino-acid chain: MLKPLGDRIVIEVVETEEKTASGIVLPDTAKEKPQEGRVVAVGAGRVLDNGQRIGRKSKVGDRVIFSKYAGTEVKYDGKEYLILRESDILAVIR.

The protein belongs to the GroES chaperonin family. As to quaternary structure, heptamer of 7 subunits arranged in a ring. Interacts with the chaperonin GroEL.

It is found in the cytoplasm. Together with the chaperonin GroEL, plays an essential role in assisting protein folding. The GroEL-GroES system forms a nano-cage that allows encapsulation of the non-native substrate proteins and provides a physical environment optimized to promote and accelerate protein folding. GroES binds to the apical surface of the GroEL ring, thereby capping the opening of the GroEL channel. This chain is Co-chaperonin GroES, found in Bacillus sp. (strain PS3).